The chain runs to 583 residues: Peptidyl-prolyl cis-trans isomerase FKBP10 (583 aa).

The first 27 residues, 1–27 (MLRAGPPSHTLLRLPLLQLLLLLLVQA), serve as a signal peptide directing secretion. 4 PPIase FKBP-type domains span residues 63-151 (GDFV…LDVW), 175-263 (SDFV…IDVH), 287-375 (GDFM…IDFH), and 400-487 (GDFV…VSRE). N-linked (GlcNAc...) asparagine glycosylation is found at N71, N183, and N295. 2 consecutive EF-hand domains span residues 498–533 (WHED…QVSE) and 543–578 (DPEK…DQDR). Positions 511, 513, 515, 517, 522, 556, 558, 560, 562, and 567 each coordinate Ca(2+). The segment at 534 to 583 (GKGRLLPGQDPEKTIGDMFQNQDRNQDGKITAEELKLKSDEDQDRVHEEL) is disordered. Residues 557 to 583 (RNQDGKITAEELKLKSDEDQDRVHEEL) show a composition bias toward basic and acidic residues. Positions 580-583 (HEEL) match the Prevents secretion from ER motif.

Glycosylated and phosphorylated.

It localises to the endoplasmic reticulum lumen. The catalysed reaction is [protein]-peptidylproline (omega=180) = [protein]-peptidylproline (omega=0). With respect to regulation, inhibited by both FK506 and rapamycin, but not by cyclosporin A. Its function is as follows. PPIases accelerate the folding of proteins during protein synthesis. The chain is Peptidyl-prolyl cis-trans isomerase FKBP10 (FKBP10) from Bos taurus (Bovine).